Here is a 269-residue protein sequence, read N- to C-terminus: Meiotically up-regulated gene 43 protein (269 aa).

It localises to the mitochondrion. Functionally, has a role in meiosis. This Schizosaccharomyces pombe (strain 972 / ATCC 24843) (Fission yeast) protein is Meiotically up-regulated gene 43 protein (mug43).